A 64-amino-acid chain; its full sequence is Large ribosomal subunit protein bL35 (64 aa).

The interval 20 to 42 is disordered; sequence GRVKREKMYGSHNLEKKNRKRTR. Residues 25 to 35 show a composition bias toward basic and acidic residues; that stretch reads EKMYGSHNLEK.

Belongs to the bacterial ribosomal protein bL35 family.

The chain is Large ribosomal subunit protein bL35 from Chlorobium phaeobacteroides (strain BS1).